Consider the following 378-residue polypeptide: Succinyl-diaminopimelate desuccinylase (378 aa).

H68 is a binding site for Zn(2+). D70 is a catalytic residue. Residue D101 participates in Zn(2+) binding. Catalysis depends on E135, which acts as the Proton acceptor. Residues E136, E164, and H350 each coordinate Zn(2+).

The protein belongs to the peptidase M20A family. DapE subfamily. Homodimer. Zn(2+) is required as a cofactor. Requires Co(2+) as cofactor.

It carries out the reaction N-succinyl-(2S,6S)-2,6-diaminopimelate + H2O = (2S,6S)-2,6-diaminopimelate + succinate. It functions in the pathway amino-acid biosynthesis; L-lysine biosynthesis via DAP pathway; LL-2,6-diaminopimelate from (S)-tetrahydrodipicolinate (succinylase route): step 3/3. Catalyzes the hydrolysis of N-succinyl-L,L-diaminopimelic acid (SDAP), forming succinate and LL-2,6-diaminopimelate (DAP), an intermediate involved in the bacterial biosynthesis of lysine and meso-diaminopimelic acid, an essential component of bacterial cell walls. This is Succinyl-diaminopimelate desuccinylase from Vibrio parahaemolyticus serotype O3:K6 (strain RIMD 2210633).